Reading from the N-terminus, the 212-residue chain is ATP-dependent dethiobiotin synthetase BioD (212 aa).

Residue 13–18 (GIGKTV) coordinates ATP. Thr-17 is a binding site for Mg(2+). Lys-33 is a catalytic residue. Position 37 (Ser-37) interacts with substrate. Mg(2+) is bound at residue Glu-100. Residues 100 to 103 (EGAG) and 184 to 186 (PRL) each bind ATP.

It belongs to the dethiobiotin synthetase family. In terms of assembly, homodimer. The cofactor is Mg(2+).

It localises to the cytoplasm. It catalyses the reaction (7R,8S)-7,8-diammoniononanoate + CO2 + ATP = (4R,5S)-dethiobiotin + ADP + phosphate + 3 H(+). Its pathway is cofactor biosynthesis; biotin biosynthesis; biotin from 7,8-diaminononanoate: step 1/2. Catalyzes a mechanistically unusual reaction, the ATP-dependent insertion of CO2 between the N7 and N8 nitrogen atoms of 7,8-diaminopelargonic acid (DAPA, also called 7,8-diammoniononanoate) to form a ureido ring. The polypeptide is ATP-dependent dethiobiotin synthetase BioD (Rhodopseudomonas palustris (strain ATCC BAA-98 / CGA009)).